Reading from the N-terminus, the 634-residue chain is Chaperone protein HtpG (634 aa).

An a; substrate-binding region spans residues 1–342 (MSVETQKETL…SNDLSLNVSR (342 aa)). Positions 343–559 (EILQKDPVID…EQDLGLQMRQ (217 aa)) are b. Residues 560 to 634 (ILEASGQKVP…LNKLLVELSA (75 aa)) form a c region.

This sequence belongs to the heat shock protein 90 family. In terms of assembly, homodimer.

The protein resides in the cytoplasm. In terms of biological role, molecular chaperone. Has ATPase activity. This Pseudomonas aeruginosa (strain ATCC 15692 / DSM 22644 / CIP 104116 / JCM 14847 / LMG 12228 / 1C / PRS 101 / PAO1) protein is Chaperone protein HtpG.